A 427-amino-acid polypeptide reads, in one-letter code: Phosphoribosylamine--glycine ligase (427 aa).

One can recognise an ATP-grasp domain in the interval 110–315 (KDFCQRHGLP…IVPILLAAAK (206 aa)). ATP is bound at residue 136-196 (LDTLEAPFVI…EEFMHGEEAS (61 aa)). Mg(2+)-binding residues include glutamate 285 and asparagine 287.

Belongs to the GARS family. It depends on Mg(2+) as a cofactor. Mn(2+) serves as cofactor.

The enzyme catalyses 5-phospho-beta-D-ribosylamine + glycine + ATP = N(1)-(5-phospho-beta-D-ribosyl)glycinamide + ADP + phosphate + H(+). It participates in purine metabolism; IMP biosynthesis via de novo pathway; N(1)-(5-phospho-D-ribosyl)glycinamide from 5-phospho-alpha-D-ribose 1-diphosphate: step 2/2. In Caulobacter vibrioides (strain ATCC 19089 / CIP 103742 / CB 15) (Caulobacter crescentus), this protein is Phosphoribosylamine--glycine ligase.